A 311-amino-acid chain; its full sequence is Tricarboxylate transport protein, mitochondrial (311 aa).

The propeptide at 1–13 (MAAPRAPRALTAA) is removed in mature form. Solcar repeat units lie at residues 23–111 (THPG…LSNH), 122–208 (RRGL…LRNW), and 218–303 (MNPL…VVKL). 3 helical membrane-spanning segments follow: residues 29–46 (ILAGGLAGGIEICITFPT), 86–105 (GLSSLLYGSIPKAAVRFGMF), and 129–143 (LGAGVAEAVVVVCPM). The residue at position 156 (S156) is a Phosphoserine. Transmembrane regions (helical) follow at residues 183–202 (GLTATVLKQGSNQAIRFFVM), 224–241 (GVFGAVAGAASVFGNTPL), and 278–297 (GTVPRLGRVCLDVAIVFVIY).

Belongs to the mitochondrial carrier (TC 2.A.29) family. Possesses a short cleavable presequence, which, however, is found to be dispensable both for targeting to mitochondria and insertion into the inner membrane. However, the presequence is required to keep SLC25A1 in a soluble state and thus in an import-competent state. Mature SLC25A1 lacking the presequence is prone to aggregation.

The protein localises to the mitochondrion inner membrane. It carries out the reaction (S)-malate(in) + citrate(out) = (S)-malate(out) + citrate(in). The catalysed reaction is citrate(out) + succinate(in) = citrate(in) + succinate(out). It catalyses the reaction D-threo-isocitrate(in) + citrate(out) = D-threo-isocitrate(out) + citrate(in). The enzyme catalyses cis-aconitate(in) + citrate(out) = cis-aconitate(out) + citrate(in). It carries out the reaction trans-aconitate(in) + citrate(out) = trans-aconitate(out) + citrate(in). The catalysed reaction is phosphoenolpyruvate(in) + citrate(out) = phosphoenolpyruvate(out) + citrate(in). It catalyses the reaction maleate(in) + citrate(out) = maleate(out) + citrate(in). In terms of biological role, mitochondrial electroneutral antiporter that exports citrate from the mitochondria into the cytosol in exchange for malate. Also able to mediate the exchange of citrate for isocitrate, phosphoenolpyruvate, cis-aconitate and to a lesser extent trans-aconitate, maleate and succinate. In the cytoplasm, citrate plays important roles in fatty acid and sterol synthesis, regulation of glycolysis, protein acetylation, and other physiopathological processes. This is Tricarboxylate transport protein, mitochondrial (Slc25a1) from Rattus norvegicus (Rat).